The following is a 139-amino-acid chain: Endoribonuclease YbeY (139 aa).

Zn(2+) contacts are provided by His99, His103, and His109.

Belongs to the endoribonuclease YbeY family. It depends on Zn(2+) as a cofactor.

The protein resides in the cytoplasm. Its function is as follows. Single strand-specific metallo-endoribonuclease involved in late-stage 70S ribosome quality control and in maturation of the 3' terminus of the 16S rRNA. In Nautilia profundicola (strain ATCC BAA-1463 / DSM 18972 / AmH), this protein is Endoribonuclease YbeY.